The primary structure comprises 860 residues: DNA mismatch repair protein MutS (860 aa).

607-614 (GPNMSGKS) lines the ATP pocket.

Belongs to the DNA mismatch repair MutS family.

Functionally, this protein is involved in the repair of mismatches in DNA. It is possible that it carries out the mismatch recognition step. This protein has a weak ATPase activity. This Listeria monocytogenes serotype 4b (strain CLIP80459) protein is DNA mismatch repair protein MutS.